A 443-amino-acid chain; its full sequence is 3-isopropylmalate dehydratase large subunit (443 aa).

Cys-347, Cys-407, and Cys-410 together coordinate [4Fe-4S] cluster.

The protein belongs to the aconitase/IPM isomerase family. LeuC type 1 subfamily. In terms of assembly, heterodimer of LeuC and LeuD. The cofactor is [4Fe-4S] cluster.

The enzyme catalyses (2R,3S)-3-isopropylmalate = (2S)-2-isopropylmalate. The protein operates within amino-acid biosynthesis; L-leucine biosynthesis; L-leucine from 3-methyl-2-oxobutanoate: step 2/4. Functionally, catalyzes the isomerization between 2-isopropylmalate and 3-isopropylmalate, via the formation of 2-isopropylmaleate. In Buchnera aphidicola subsp. Uroleucon obscurum, this protein is 3-isopropylmalate dehydratase large subunit.